Here is a 386-residue protein sequence, read N- to C-terminus: Succinate--CoA ligase [ADP-forming] subunit beta (386 aa).

The ATP-grasp domain occupies 9-244 (KEILRNFGVP…LDEEDPAEVE (236 aa)). Residues Lys46, 53–55 (GRG), Glu99, Ala102, and Glu107 contribute to the ATP site. Mg(2+) is bound by residues Asn199 and Asp213. Substrate-binding positions include Asn264 and 321–323 (GIM).

It belongs to the succinate/malate CoA ligase beta subunit family. As to quaternary structure, heterotetramer of two alpha and two beta subunits. It depends on Mg(2+) as a cofactor.

The catalysed reaction is succinate + ATP + CoA = succinyl-CoA + ADP + phosphate. The enzyme catalyses GTP + succinate + CoA = succinyl-CoA + GDP + phosphate. It functions in the pathway carbohydrate metabolism; tricarboxylic acid cycle; succinate from succinyl-CoA (ligase route): step 1/1. In terms of biological role, succinyl-CoA synthetase functions in the citric acid cycle (TCA), coupling the hydrolysis of succinyl-CoA to the synthesis of either ATP or GTP and thus represents the only step of substrate-level phosphorylation in the TCA. The beta subunit provides nucleotide specificity of the enzyme and binds the substrate succinate, while the binding sites for coenzyme A and phosphate are found in the alpha subunit. This Polaromonas naphthalenivorans (strain CJ2) protein is Succinate--CoA ligase [ADP-forming] subunit beta.